The following is a 363-amino-acid chain: MKVAISGGGTGGHVYPALALIRELKKSHPEAEFLYIGTEKGLEAGIVKREGIPFEAIEITGFKRSLSLENIKTVMRFLSGAKKSKQILRDFKPDVVIGTGGYVCGPVVYAAAKLKIPTLIHEQNSVAGLTNKFLSRYTDKVAICFEEVSDSFASEKIVFTGNPRASEVVGVDSEGALEAYGLVSGKPTVLVFGGSRGARGVNEAVEAVLPEWNNRDFQLLYVTGDVHYEKIKDSLAELNLGNHISVQPFIYDMPKILNAVTLVVSRAGATTLAELTALGVPSILIPSPYVTANHQENNARALEKNNAAIVITEAELKNTDLMATVDSILNDEAKLNSMKLSAKQMGRPDAAAKLVEAVLSIMK.

UDP-N-acetyl-alpha-D-glucosamine-binding positions include 10 to 12 (TGG), N124, S195, I250, and Q295.

This sequence belongs to the glycosyltransferase 28 family. MurG subfamily.

The protein resides in the cell membrane. The enzyme catalyses di-trans,octa-cis-undecaprenyl diphospho-N-acetyl-alpha-D-muramoyl-L-alanyl-D-glutamyl-meso-2,6-diaminopimeloyl-D-alanyl-D-alanine + UDP-N-acetyl-alpha-D-glucosamine = di-trans,octa-cis-undecaprenyl diphospho-[N-acetyl-alpha-D-glucosaminyl-(1-&gt;4)]-N-acetyl-alpha-D-muramoyl-L-alanyl-D-glutamyl-meso-2,6-diaminopimeloyl-D-alanyl-D-alanine + UDP + H(+). It functions in the pathway cell wall biogenesis; peptidoglycan biosynthesis. Functionally, cell wall formation. Catalyzes the transfer of a GlcNAc subunit on undecaprenyl-pyrophosphoryl-MurNAc-pentapeptide (lipid intermediate I) to form undecaprenyl-pyrophosphoryl-MurNAc-(pentapeptide)GlcNAc (lipid intermediate II). The polypeptide is UDP-N-acetylglucosamine--N-acetylmuramyl-(pentapeptide) pyrophosphoryl-undecaprenol N-acetylglucosamine transferase (Listeria monocytogenes serovar 1/2a (strain ATCC BAA-679 / EGD-e)).